Here is a 415-residue protein sequence, read N- to C-terminus: Peptide chain release factor subunit 1 (415 aa).

It belongs to the eukaryotic release factor 1 family. In terms of assembly, heterodimer of two subunits, one of which binds GTP.

It is found in the cytoplasm. In terms of biological role, directs the termination of nascent peptide synthesis (translation) in response to the termination codons UAA, UAG and UGA. This Thermococcus onnurineus (strain NA1) protein is Peptide chain release factor subunit 1.